A 334-amino-acid chain; its full sequence is Anthranilate phosphoribosyltransferase (334 aa).

5-phospho-alpha-D-ribose 1-diphosphate contacts are provided by residues glycine 79, glycine 82–aspartate 83, serine 87, asparagine 89–threonine 92, lysine 107–serine 115, and serine 119. Glycine 79 is a binding site for anthranilate. Residue serine 91 coordinates Mg(2+). Asparagine 110 lines the anthranilate pocket. Arginine 165 contacts anthranilate. Mg(2+)-binding residues include aspartate 224 and glutamate 225.

The protein belongs to the anthranilate phosphoribosyltransferase family. Homodimer. Requires Mg(2+) as cofactor.

It catalyses the reaction N-(5-phospho-beta-D-ribosyl)anthranilate + diphosphate = 5-phospho-alpha-D-ribose 1-diphosphate + anthranilate. It functions in the pathway amino-acid biosynthesis; L-tryptophan biosynthesis; L-tryptophan from chorismate: step 2/5. Functionally, catalyzes the transfer of the phosphoribosyl group of 5-phosphorylribose-1-pyrophosphate (PRPP) to anthranilate to yield N-(5'-phosphoribosyl)-anthranilate (PRA). The chain is Anthranilate phosphoribosyltransferase from Streptococcus pneumoniae (strain ATCC 700669 / Spain 23F-1).